Consider the following 495-residue polypeptide: Probable cytosol aminopeptidase (495 aa).

Mn(2+)-binding residues include Lys-267 and Asp-272. Residue Lys-279 is part of the active site. Mn(2+)-binding residues include Asp-290, Asp-349, and Glu-351. The active site involves Arg-353.

This sequence belongs to the peptidase M17 family. Requires Mn(2+) as cofactor.

It is found in the cytoplasm. It catalyses the reaction Release of an N-terminal amino acid, Xaa-|-Yaa-, in which Xaa is preferably Leu, but may be other amino acids including Pro although not Arg or Lys, and Yaa may be Pro. Amino acid amides and methyl esters are also readily hydrolyzed, but rates on arylamides are exceedingly low.. The catalysed reaction is Release of an N-terminal amino acid, preferentially leucine, but not glutamic or aspartic acids.. Functionally, presumably involved in the processing and regular turnover of intracellular proteins. Catalyzes the removal of unsubstituted N-terminal amino acids from various peptides. This Histophilus somni (strain 2336) (Haemophilus somnus) protein is Probable cytosol aminopeptidase.